The primary structure comprises 488 residues: Bifunctional protein GlmU (488 aa).

Residues Met1–Arg237 are pyrophosphorylase. UDP-N-acetyl-alpha-D-glucosamine is bound by residues Leu13 to Gly16, Lys27, Gln82, Gly87 to Thr88, Ser110 to Asp112, Gly149, Glu164, Asn179, and Asn235. Position 112 (Asp112) interacts with Mg(2+). Asn235 is a binding site for Mg(2+). Positions Ile238 to Ala258 are linker. Positions Gly259–Ser488 are N-acetyltransferase. The UDP-N-acetyl-alpha-D-glucosamine site is built by Arg341 and Lys359. His371 (proton acceptor) is an active-site residue. UDP-N-acetyl-alpha-D-glucosamine is bound by residues Tyr374 and Asn385. Acetyl-CoA contacts are provided by residues Ala388, Asn394 to Tyr395, Ser413, Ala431, and Arg448. The interval Ala459–Ser488 is disordered. Basic residues predominate over residues Arg478–Ser488.

The protein in the N-terminal section; belongs to the N-acetylglucosamine-1-phosphate uridyltransferase family. It in the C-terminal section; belongs to the transferase hexapeptide repeat family. As to quaternary structure, homotrimer. It depends on Mg(2+) as a cofactor.

The protein localises to the cytoplasm. The catalysed reaction is alpha-D-glucosamine 1-phosphate + acetyl-CoA = N-acetyl-alpha-D-glucosamine 1-phosphate + CoA + H(+). The enzyme catalyses N-acetyl-alpha-D-glucosamine 1-phosphate + UTP + H(+) = UDP-N-acetyl-alpha-D-glucosamine + diphosphate. It functions in the pathway nucleotide-sugar biosynthesis; UDP-N-acetyl-alpha-D-glucosamine biosynthesis; N-acetyl-alpha-D-glucosamine 1-phosphate from alpha-D-glucosamine 6-phosphate (route II): step 2/2. It participates in nucleotide-sugar biosynthesis; UDP-N-acetyl-alpha-D-glucosamine biosynthesis; UDP-N-acetyl-alpha-D-glucosamine from N-acetyl-alpha-D-glucosamine 1-phosphate: step 1/1. The protein operates within bacterial outer membrane biogenesis; LPS lipid A biosynthesis. In terms of biological role, catalyzes the last two sequential reactions in the de novo biosynthetic pathway for UDP-N-acetylglucosamine (UDP-GlcNAc). The C-terminal domain catalyzes the transfer of acetyl group from acetyl coenzyme A to glucosamine-1-phosphate (GlcN-1-P) to produce N-acetylglucosamine-1-phosphate (GlcNAc-1-P), which is converted into UDP-GlcNAc by the transfer of uridine 5-monophosphate (from uridine 5-triphosphate), a reaction catalyzed by the N-terminal domain. This Anaeromyxobacter dehalogenans (strain 2CP-C) protein is Bifunctional protein GlmU.